Reading from the N-terminus, the 180-residue chain is GTP cyclohydrolase 1 (180 aa).

Zn(2+)-binding residues include Cys-71, His-74, and Cys-142.

Belongs to the GTP cyclohydrolase I family. As to quaternary structure, toroid-shaped homodecamer, composed of two pentamers of five dimers.

The enzyme catalyses GTP + H2O = 7,8-dihydroneopterin 3'-triphosphate + formate + H(+). Its pathway is cofactor biosynthesis; 7,8-dihydroneopterin triphosphate biosynthesis; 7,8-dihydroneopterin triphosphate from GTP: step 1/1. The protein is GTP cyclohydrolase 1 of Helicobacter pylori (strain HPAG1).